The chain runs to 129 residues: M-zodatoxin-Lt8g (129 aa).

Residues 1–20 (MKYFVVALALVAAFACIAES) form the signal peptide. Residues 21–60 (KPAESEHELAEVEEENELADLEDAVWLEHLADLSDLEEAR) constitute a propeptide that is removed on maturation. The Processing quadruplet motif motif lies at 57-60 (EEAR).

Post-translationally, cleavage of the propeptide depends on the processing quadruplet motif (XXXR, with at least one of X being E). As to expression, expressed by the venom gland.

The protein localises to the secreted. In terms of biological role, insecticidal, cytolytic and antimicrobial peptide. Has insecticidal activity against the flesh fly S.carnaria. Has antibacterial activity against the Gram-negative bacteria E.coli. Forms voltage-dependent, ion-permeable channels in membranes. At high concentration causes cell membrane lysis. In Lachesana tarabaevi (Spider), this protein is M-zodatoxin-Lt8g (cit 1-8).